Here is a 99-residue protein sequence, read N- to C-terminus: Acylphosphatase-2 (99 aa).

S2 bears the N-acetylserine mark. The 91-residue stretch at 9–99 (SVDYEVFGRV…LEYSNFSIRY (91 aa)) folds into the Acylphosphatase-like domain. Active-site residues include R24 and N42. S93 is modified (phosphoserine).

The protein belongs to the acylphosphatase family.

The enzyme catalyses an acyl phosphate + H2O = a carboxylate + phosphate + H(+). Its physiological role is not yet clear. This Homo sapiens (Human) protein is Acylphosphatase-2 (ACYP2).